Consider the following 246-residue polypeptide: DNA repair protein RecO (246 aa).

Belongs to the RecO family.

Its function is as follows. Involved in DNA repair and RecF pathway recombination. This chain is DNA repair protein RecO, found in Proteus mirabilis (strain HI4320).